We begin with the raw amino-acid sequence, 478 residues long: Transcriptional regulator Erg (478 aa).

Positions 34–47 (TASSSSEYGQTSKM) are enriched in polar residues. Disordered regions lie at residues 34–56 (TASS…QQDW) and 73–93 (NQVN…GGKM). The 87-residue stretch at 113–199 (IPPPNMTTNE…SHLHYLRETP (87 aa)) folds into the PNT domain. The tract at residues 242–303 (QRITTRPDLP…ILGPTSSRLA (62 aa)) is disordered. The span at 259-280 (AWTSHSHPTQSKATQPSSSTVP) shows a compositional bias: polar residues. A DNA-binding region (ETS) is located at residues 310–390 (IQLWQFLLEL…HGKRYAYKFD (81 aa)).

It belongs to the ETS family. Expressed in mesoderm- and, to a lesser extent, in ectoderm-derived tissues.

Its subcellular location is the nucleus. Its function is as follows. Acts as a transcriptional activator. This is Transcriptional regulator Erg (ERG) from Gallus gallus (Chicken).